The following is a 166-amino-acid chain: Mitochondrial translation release factor in rescue (166 aa).

The transit peptide at 1-35 (MSTVGLFHFPTPLTRICPAPWGLRLWEKLTLLSPG) directs the protein to the mitochondrion. The interval 57 to 121 (ENELEEQFVK…LQEKVDVFYN (65 aa)) is GGQ domain. The GGQ signature appears at 71 to 73 (GGQ). Glutamine 73 carries the N5-methylglutamine modification. Positions 122 to 148 (GENSPVHKEKREAAKKKQERKKRAKET) are disordered. Residues 126 to 137 (PVHKEKREAAKK) are compositionally biased toward basic and acidic residues. Residues 127 to 160 (VHKEKREAAKKKQERKKRAKETLEKKKLLKELWE) adopt a coiled-coil conformation.

Belongs to the prokaryotic/mitochondrial release factor family. As to quaternary structure, interacts (via C-terminus) with MTRES1 (via S4 domain). Associates with mitoribosomal S39 large subunit, peptidyl tRNA and nascent chain. Post-translationally, methylation of glutamine in the GGQ triplet by HEMK1. Expressed in all areas of the brain tested.

The protein resides in the mitochondrion. In terms of biological role, part of a mitoribosome-associated quality control pathway that prevents aberrant translation by responding to interruptions during elongation. As heterodimer with MTRES1, ejects the unfinished nascent chain and peptidyl transfer RNA (tRNA), respectively, from stalled ribosomes. Recruitment of mitoribosome biogenesis factors to these quality control intermediates suggests additional roles for MTRES1 and MTRF during mitoribosome rescue. The protein is Mitochondrial translation release factor in rescue of Homo sapiens (Human).